The primary structure comprises 278 residues: S-formylglutathione hydrolase YeiG (278 aa).

Catalysis depends on charge relay system residues Ser-145, Asp-223, and His-256.

The protein belongs to the esterase D family.

It catalyses the reaction S-formylglutathione + H2O = formate + glutathione + H(+). In terms of biological role, serine hydrolase involved in the detoxification of formaldehyde. Hydrolyzes S-formylglutathione to glutathione and formate. In Escherichia coli O157:H7, this protein is S-formylglutathione hydrolase YeiG (yeiG).